Reading from the N-terminus, the 665-residue chain is Secreted LysM effector Lys3 (665 aa).

The first 19 residues, M1–A19, serve as a signal peptide directing secretion. 2 N-linked (GlcNAc...) asparagine glycosylation sites follow: N43 and N153. 3 LysM domains span residues R166 to L211, T216 to I264, and K303 to V349. N234 is a glycosylation site (N-linked (GlcNAc...) asparagine). Residue N398 is glycosylated (N-linked (GlcNAc...) asparagine). In terms of domain architecture, LysM 4 spans S409–C454. N-linked (GlcNAc...) asparagine glycosylation is present at N531. Residues S585–G610 form a disordered region. Over residues S592 to G602 the composition is skewed to low complexity. The N-linked (GlcNAc...) asparagine glycan is linked to N614. The 47-residue stretch at K617–V663 folds into the LysM 5 domain.

It belongs to the secreted LysM effector family.

In terms of biological role, might have a role in sequestration of chitin oligosaccharides (breakdown products of fungal cell walls that are released during invasion and act as triggers of host immunity) to dampen host defense. This Pochonia chlamydosporia (strain 123) (Metacordyceps chlamydosporia) protein is Secreted LysM effector Lys3.